The chain runs to 227 residues: MGDAGSERSKAPSLPPRCPCGFWGSSKTMNLCSKCFADFQKKQPDDDSAPSTSNSQSDLFSEETTSDNNNTSITTPTLSPSQQPLPTELNVTSPSKEECGPCTDTAHVSLITPTKRSCGTDSQSENEASPVKRPRLLENTERSEETSRSKQKSRRRCFQCQTKLELVQQELGSCRCGYVFCMLHRLPEQHDCTFDHMGRGREEAIMKMVKLDRKVGRSCQRIGEGCS.

Residues 12–44 form an A20-type zinc finger; that stretch reads PSLPPRCPCGFWGSSKTMNLCSKCFADFQKKQP. Positions 18, 20, 32, and 35 each coordinate Zn(2+). Disordered stretches follow at residues 41–100 and 113–148; these read KKQP…EECG and PTKR…ETSR. The segment covering 49-59 has biased composition (polar residues); that stretch reads APSTSNSQSDL. The segment covering 66–77 has biased composition (low complexity); the sequence is SDNNNTSITTPT. Polar residues-rich tracts occupy residues 78–94 and 113–127; these read LSPS…VTSP and PTKR…SENE. Basic and acidic residues predominate over residues 135–148; the sequence is RLLENTERSEETSR. The AN1-type zinc finger occupies 151 to 200; that stretch reads QKSRRRCFQCQTKLELVQQELGSCRCGYVFCMLHRLPEQHDCTFDHMGRG. Zn(2+) is bound by residues Cys157, Cys160, Cys174, Cys176, Cys181, His184, His190, and Cys192.

This chain is AN1-type zinc finger protein 3 (ZFAND3), found in Homo sapiens (Human).